The following is a 173-amino-acid chain: Nicotinamide-nucleotide adenylyltransferase (173 aa).

The protein belongs to the archaeal NMN adenylyltransferase family.

It is found in the cytoplasm. It catalyses the reaction beta-nicotinamide D-ribonucleotide + ATP + H(+) = diphosphate + NAD(+). It functions in the pathway cofactor biosynthesis; NAD(+) biosynthesis; NAD(+) from nicotinamide D-ribonucleotide: step 1/1. The protein is Nicotinamide-nucleotide adenylyltransferase of Methanosarcina mazei (strain ATCC BAA-159 / DSM 3647 / Goe1 / Go1 / JCM 11833 / OCM 88) (Methanosarcina frisia).